The sequence spans 366 residues: Galactoside alpha-(1,2)-fucosyltransferase 1 (366 aa).

Topologically, residues 1–8 (MWPRSHRH) are cytoplasmic. The helical; Signal-anchor for type II membrane protein transmembrane segment at 9 to 25 (LCLAFLLVCVLSAISFL) threads the bilayer. Topologically, residues 26–366 (IHFHQDSIRH…LSPLWPLAEP (341 aa)) are lumenal. N-linked (GlcNAc...) asparagine glycosylation is found at N66, N302, and N328.

The protein belongs to the glycosyltransferase 11 family.

The protein resides in the golgi apparatus. Its subcellular location is the golgi stack membrane. The enzyme catalyses a beta-D-galactosyl-(1-&gt;4)-N-acetyl-beta-D-glucosaminyl derivative + GDP-beta-L-fucose = an alpha-L-Fuc-(1-&gt;2)-beta-D-Gal-(1-&gt;4)-beta-D-GlcNAc derivative + GDP + H(+). It catalyses the reaction a ganglioside GA1 + GDP-beta-L-fucose = a ganglioside Fuc-GA1 + GDP + H(+). It carries out the reaction a beta-D-Gal-(1-&gt;3)-beta-D-GlcNAc-(1-&gt;3)-beta-D-Gal-(1-&gt;4)-beta-D-Glc-(1&lt;-&gt;1')-Cer(d18:1(4E)) + GDP-beta-L-fucose = alpha-L-fucosyl-(1-&gt;2)- beta-D-galactosyl-(1-&gt;3)-N-acetyl-beta-D-glucosaminyl-(1-&gt;3)-beta-D-galactosyl-(1-&gt;4)-beta-D-glucosyl-(1&lt;-&gt;1')-N-acylsphing-4-enine + GDP + H(+). The catalysed reaction is a neolactoside nLc4Cer(d18:1(4E)) + GDP-beta-L-fucose = a neolactoside IV(2)-alpha-Fuc-nLc4Cer(d18:1(4E)) + GDP + H(+). The enzyme catalyses a ganglioside GM1 + GDP-beta-L-fucose = a ganglioside Fuc-GM1 + GDP + H(+). It catalyses the reaction beta-D-galactosyl-(1-&gt;3)-N-acetyl-D-galactosamine + GDP-beta-L-fucose = alpha-L-fucosyl-(1-&gt;2)-beta-D-galactosyl-(1-&gt;3)-N-acetyl-D-galactosamine + GDP + H(+). It participates in protein modification; protein glycosylation. Catalyzes the transfer of L-fucose, from a guanosine diphosphate-beta-L-fucose, to the terminal galactose residue of glycoconjugates through an alpha(1,2) linkage leading to H antigen synthesis that is an intermediate substrate in the synthesis of ABO blood group antigens. H antigen is essential for maturation of the glomerular layer of the main olfactory bulb, in cell migration and early cell-cell contacts during tumor associated angiogenesis. Preferentially fucosylates soluble lactose and to a lesser extent fucosylates glycolipids gangliosides GA1 and GM1a. This is Galactoside alpha-(1,2)-fucosyltransferase 1 from Saimiri boliviensis boliviensis (Bolivian squirrel monkey).